Consider the following 369-residue polypeptide: MKLKTLTLTHYRNYETAELNFSDEVNIFIGINAQGKTNLLEAIYCLAMAKSHRTSNDKELIGWGHEFSHIEGMLSYKHGTMPLSLSISKKGKKAKVNYLEQKRLTEYIGHMNVVLFAPEDLNLVKGSPQIRRRFIDMEIGQISAVYLNDLSNYQRLLKQKNHLLKQMKLSNSNDMTMLEVINEQFAQYAVKLTLRRKMFIEQLETLAIPIHTGITKDKERLSLRYNASLNYELAEQEMFEETIRILNANMGKEIERTQSLYGPHRDDLSFKINDIDVQTYGSQGQQRTTALSIKLAEIELINQEIGEYPILLLDDVLSELDDDRQTHLLTTIQHKVQTFVTTTSVEGIEHETINKAKLFNVSEGQISTN.

30 to 37 (GINAQGKT) lines the ATP pocket.

It belongs to the RecF family.

It localises to the cytoplasm. In terms of biological role, the RecF protein is involved in DNA metabolism; it is required for DNA replication and normal SOS inducibility. RecF binds preferentially to single-stranded, linear DNA. It also seems to bind ATP. This Macrococcus caseolyticus (strain JCSC5402) (Macrococcoides caseolyticum) protein is DNA replication and repair protein RecF.